The chain runs to 447 residues: Large ribosomal subunit protein bL27m (447 aa).

Basic and acidic residues-rich tracts occupy residues Gln-377–Lys-402 and Lys-409–Asp-447. Residues Gln-377 to Asp-447 are disordered.

It belongs to the bacterial ribosomal protein bL27 family. Component of the mitochondrial large ribosomal subunit (mt-LSU). Mature N.crassa 74S mitochondrial ribosomes consist of a small (37S) and a large (54S) subunit. The 37S small subunit contains a 16S ribosomal RNA (16S mt-rRNA) and 32 different proteins. The 54S large subunit contains a 23S rRNA (23S mt-rRNA) and 42 different proteins.

It localises to the mitochondrion. Its function is as follows. Component of the mitochondrial ribosome (mitoribosome), a dedicated translation machinery responsible for the synthesis of mitochondrial genome-encoded proteins, including at least some of the essential transmembrane subunits of the mitochondrial respiratory chain. The mitoribosomes are attached to the mitochondrial inner membrane and translation products are cotranslationally integrated into the membrane. This is Large ribosomal subunit protein bL27m (mrp7) from Neurospora crassa (strain ATCC 24698 / 74-OR23-1A / CBS 708.71 / DSM 1257 / FGSC 987).